We begin with the raw amino-acid sequence, 119 residues long: Probable prefoldin subunit 6 (119 aa).

The protein belongs to the prefoldin subunit beta family. Heterohexamer of two PFD-alpha type and four PFD-beta type subunits. May interact with MSP1.

Functionally, binds specifically to cytosolic chaperonin (c-CPN) and transfers target proteins to it. Binds to nascent polypeptide chain and promotes folding in an environment in which there are many competing pathways for nonnative proteins. In Plasmodium falciparum (isolate 3D7), this protein is Probable prefoldin subunit 6.